A 636-amino-acid chain; its full sequence is 1-deoxy-D-xylulose-5-phosphate synthase (636 aa).

Thiamine diphosphate is bound by residues His-72 and 113 to 115; that span reads GHA. Residue Asp-144 coordinates Mg(2+). Residues 145–146, Asn-174, Tyr-287, and Glu-370 each bind thiamine diphosphate; that span reads GA. Residue Asn-174 coordinates Mg(2+).

The protein belongs to the transketolase family. DXPS subfamily. As to quaternary structure, homodimer. Mg(2+) serves as cofactor. It depends on thiamine diphosphate as a cofactor.

The enzyme catalyses D-glyceraldehyde 3-phosphate + pyruvate + H(+) = 1-deoxy-D-xylulose 5-phosphate + CO2. It participates in metabolic intermediate biosynthesis; 1-deoxy-D-xylulose 5-phosphate biosynthesis; 1-deoxy-D-xylulose 5-phosphate from D-glyceraldehyde 3-phosphate and pyruvate: step 1/1. Functionally, catalyzes the acyloin condensation reaction between C atoms 2 and 3 of pyruvate and glyceraldehyde 3-phosphate to yield 1-deoxy-D-xylulose-5-phosphate (DXP). This Microcystis aeruginosa (strain NIES-843 / IAM M-2473) protein is 1-deoxy-D-xylulose-5-phosphate synthase.